We begin with the raw amino-acid sequence, 335 residues long: Mesoderm-specific transcript protein (335 aa).

2 consecutive transmembrane segments (helical) span residues 13-33 (WWVQVGLLAVPLLAAYLHIPP) and 63-83 (VGVVGSPEIVVLLHGFPTSSY). Residues 71–310 (IVVLLHGFPT…PRSTVSILDD (240 aa)) enclose the AB hydrolase-1 domain. The RVIALD motif lies at 98–103 (RVIALD). N163 is a glycosylation site (N-linked (GlcNAc...) asparagine). The helical transmembrane segment at 266-286 (VGALASVSIPIHFIYGPLDPI) threads the bilayer.

It belongs to the AB hydrolase superfamily. As to expression, expressed in mesodermal tissues. Isoform 1 is exclusively expressed from the paternal allele in all fetal tissues and cell lines examined, whereas isoform 2 is preferentially expressed from the paternal allele in a tissue-type-specific manner.

The protein resides in the endoplasmic reticulum membrane. This is Mesoderm-specific transcript protein (Mest) from Mus musculus (Mouse).